A 151-amino-acid polypeptide reads, in one-letter code: UPF0178 protein GSU0171 (151 aa).

Belongs to the UPF0178 family.

In Geobacter sulfurreducens (strain ATCC 51573 / DSM 12127 / PCA), this protein is UPF0178 protein GSU0171.